The sequence spans 368 residues: Chaperone protein DnaJ (368 aa).

Positions 5–69 (DYYEVLGLSQ…QKRAQYDQFG (65 aa)) constitute a J domain. Residues 130–212 (GKELNVEIPV…CHGSGKVRKR (83 aa)) form a CR-type zinc finger. Zn(2+)-binding residues include C143, C146, C160, C163, C186, C189, C200, and C203. CXXCXGXG motif repeat units lie at residues 143–150 (CDTCKGSG), 160–167 (CKHCSGSG), 186–193 (CGHCSGTG), and 200–207 (CTTCHGSG).

Belongs to the DnaJ family. As to quaternary structure, homodimer. Requires Zn(2+) as cofactor.

Its subcellular location is the cytoplasm. Its function is as follows. Participates actively in the response to hyperosmotic and heat shock by preventing the aggregation of stress-denatured proteins and by disaggregating proteins, also in an autonomous, DnaK-independent fashion. Unfolded proteins bind initially to DnaJ; upon interaction with the DnaJ-bound protein, DnaK hydrolyzes its bound ATP, resulting in the formation of a stable complex. GrpE releases ADP from DnaK; ATP binding to DnaK triggers the release of the substrate protein, thus completing the reaction cycle. Several rounds of ATP-dependent interactions between DnaJ, DnaK and GrpE are required for fully efficient folding. Also involved, together with DnaK and GrpE, in the DNA replication of plasmids through activation of initiation proteins. This chain is Chaperone protein DnaJ, found in Bacillus mycoides (strain KBAB4) (Bacillus weihenstephanensis).